We begin with the raw amino-acid sequence, 115 residues long: Large ribosomal subunit protein bL20c (115 aa).

It belongs to the bacterial ribosomal protein bL20 family.

The protein localises to the plastid. The protein resides in the chloroplast. Functionally, binds directly to 23S ribosomal RNA and is necessary for the in vitro assembly process of the 50S ribosomal subunit. It is not involved in the protein synthesizing functions of that subunit. The sequence is that of Large ribosomal subunit protein bL20c from Emiliania huxleyi (Coccolithophore).